Consider the following 638-residue polypeptide: LIM domain kinase 2 (638 aa).

LIM zinc-binding domains are found at residues 12-63 (CQGC…CHKD) and 72-124 (CHGC…CGKC). A PDZ domain is found at 152–239 (HISMPATTEG…TLQLLIEHDP (88 aa)). The tract at residues 280–304 (RRRSLRRSNSISKSPGPSSPKEPLL) is disordered. Low complexity predominate over residues 286–304 (RSNSISKSPGPSSPKEPLL). A phosphoserine mark is found at Ser293 and Ser298. A Protein kinase domain is found at 331–608 (LIHGEVLGKG…DFFEALSLYL (278 aa)). ATP contacts are provided by residues 337–345 (LGKGFFGQA) and Asn360. Residue Asp451 is part of the active site. Residue Thr505 is modified to Phosphothreonine; by ROCK1 and CDC42BP.

The protein belongs to the protein kinase superfamily. TKL Ser/Thr protein kinase family. As to quaternary structure, binds ROCK1 and MARF1. Interacts with NISCH. In terms of processing, phosphorylated on serine and/or threonine residues by ROCK1.

It is found in the cytoplasm. The protein localises to the cytoskeleton. It localises to the spindle. The protein resides in the microtubule organizing center. Its subcellular location is the centrosome. It catalyses the reaction L-seryl-[protein] + ATP = O-phospho-L-seryl-[protein] + ADP + H(+). The catalysed reaction is L-threonyl-[protein] + ATP = O-phospho-L-threonyl-[protein] + ADP + H(+). Its function is as follows. Serine/threonine-protein kinase that plays an essential role in the regulation of actin filament dynamics. Acts downstream of several Rho family GTPase signal transduction pathways. Involved in astral microtubule organization and mitotic spindle orientation during early stages of mitosis by mediating phosphorylation of TPPP. Displays serine/threonine-specific phosphorylation of myelin basic protein and histone (MBP) in vitro. Suppresses ciliogenesis via multiple pathways; phosphorylation of CFL1, suppression of directional trafficking of ciliary vesicles to the ciliary base, and by facilitating YAP1 nuclear localization where it acts as a transcriptional corepressor of the TEAD4 target genes AURKA and PLK1. This is LIM domain kinase 2 (LIMK2) from Bos taurus (Bovine).